Consider the following 449-residue polypeptide: Tubulin beta-5 chain (449 aa).

8 residues coordinate GTP: Q11, E70, S139, G143, T144, G145, N205, and N227. E70 is a Mg(2+) binding site. A disordered region spans residues 427-449 (QDATADEEGEYDVEEEEEGDYET). The span at 430-449 (TADEEGEYDVEEEEEGDYET) shows a compositional bias: acidic residues.

It belongs to the tubulin family. In terms of assembly, dimer of alpha and beta chains. A typical microtubule is a hollow water-filled tube with an outer diameter of 25 nm and an inner diameter of 15 nM. Alpha-beta heterodimers associate head-to-tail to form protofilaments running lengthwise along the microtubule wall with the beta-tubulin subunit facing the microtubule plus end conferring a structural polarity. Microtubules usually have 13 protofilaments but different protofilament numbers can be found in some organisms and specialized cells. Requires Mg(2+) as cofactor.

The protein resides in the cytoplasm. It localises to the cytoskeleton. Tubulin is the major constituent of microtubules, a cylinder consisting of laterally associated linear protofilaments composed of alpha- and beta-tubulin heterodimers. Microtubules grow by the addition of GTP-tubulin dimers to the microtubule end, where a stabilizing cap forms. Below the cap, tubulin dimers are in GDP-bound state, owing to GTPase activity of alpha-tubulin. This Arabidopsis thaliana (Mouse-ear cress) protein is Tubulin beta-5 chain (TUBB5).